We begin with the raw amino-acid sequence, 220 residues long: Iron-sulfur flavoprotein AF_1436 (220 aa).

Positions 47, 50, 53, and 59 each coordinate [4Fe-4S] cluster.

Belongs to the SsuE family. Isf subfamily. In terms of assembly, homodimer. Requires FMN as cofactor. The cofactor is [4Fe-4S] cluster.

Redox-active protein probably involved in electron transport. The protein is Iron-sulfur flavoprotein AF_1436 of Archaeoglobus fulgidus (strain ATCC 49558 / DSM 4304 / JCM 9628 / NBRC 100126 / VC-16).